A 131-amino-acid chain; its full sequence is Small ribosomal subunit protein uS8 (131 aa).

It belongs to the universal ribosomal protein uS8 family. As to quaternary structure, part of the 30S ribosomal subunit. Contacts proteins S5 and S12.

In terms of biological role, one of the primary rRNA binding proteins, it binds directly to 16S rRNA central domain where it helps coordinate assembly of the platform of the 30S subunit. The polypeptide is Small ribosomal subunit protein uS8 (Novosphingobium aromaticivorans (strain ATCC 700278 / DSM 12444 / CCUG 56034 / CIP 105152 / NBRC 16084 / F199)).